Consider the following 200-residue polypeptide: Serine/arginine-rich splicing factor RSZ22 (200 aa).

In terms of domain architecture, RRM spans 2 to 71 (SRVYVGNLDP…NGWRVEQSHN (70 aa)). The span at 62-83 (NGWRVEQSHNRGERGGGGRGGD) shows a compositional bias: basic and acidic residues. 2 disordered regions span residues 62–97 (NGWRVEQSHNRGERGGGGRGGDRGGGGGGRGGRGGS) and 112–200 (RECR…RSRS). A compositionally biased stretch (gly residues) spans 84–96 (RGGGGGGRGGRGG). The CCHC-type zinc finger occupies 99–116 (LKCYECGETGHFARECRN). A compositionally biased stretch (basic residues) spans 120–137 (TGRRRSKSRSRTPPRYRR). A phosphoserine mark is found at Ser138, Ser147, Ser152, Ser160, Ser162, Ser174, and Ser200. Positions 138 to 150 (SPSYGRRSYSPRA) are enriched in low complexity. Over residues 151–166 (RSPPPPRRRSPSPPPA) the composition is skewed to pro residues.

Belongs to the splicing factor SR family. RSZ subfamily. Component of the spliceosome. Interacts with AFC2, RS2Z33 and RNU1. Post-translationally, extensively phosphorylated on serine residues in the RS domain. Phosphorylated by AFC2. In terms of tissue distribution, expressed in primary and lateral roots, stems, petioles, abaxial and adaxial epidermis cells, trichomes, unopened flowers, anther filaments, anthers, stigma, pollen, pollen tube, ovule funiculi, integuments, embryo sac and developing seeds.

The protein resides in the nucleus speckle. Its subcellular location is the nucleus. The protein localises to the nucleolus. It localises to the nucleoplasm. It is found in the cytoplasm. In terms of biological role, sequence-specific RNA-binding protein probably involved in pre-mRNA splicing. In vitro, can complement efficiently splicing-deficient mammalian SRSF7-depleted HeLa cell extract. This Arabidopsis thaliana (Mouse-ear cress) protein is Serine/arginine-rich splicing factor RSZ22 (RSZ22).